The primary structure comprises 119 residues: Ribonuclease P protein component (119 aa).

This sequence belongs to the RnpA family. Consists of a catalytic RNA component (M1 or rnpB) and a protein subunit.

The enzyme catalyses Endonucleolytic cleavage of RNA, removing 5'-extranucleotides from tRNA precursor.. In terms of biological role, RNaseP catalyzes the removal of the 5'-leader sequence from pre-tRNA to produce the mature 5'-terminus. It can also cleave other RNA substrates such as 4.5S RNA. The protein component plays an auxiliary but essential role in vivo by binding to the 5'-leader sequence and broadening the substrate specificity of the ribozyme. The chain is Ribonuclease P protein component from Escherichia coli O6:H1 (strain CFT073 / ATCC 700928 / UPEC).